We begin with the raw amino-acid sequence, 156 residues long: Ribosomal RNA large subunit methyltransferase H (156 aa).

S-adenosyl-L-methionine contacts are provided by residues Leu73, Gly104, and 123 to 128 (LSSLTL).

Belongs to the RNA methyltransferase RlmH family. Homodimer.

Its subcellular location is the cytoplasm. It carries out the reaction pseudouridine(1915) in 23S rRNA + S-adenosyl-L-methionine = N(3)-methylpseudouridine(1915) in 23S rRNA + S-adenosyl-L-homocysteine + H(+). Functionally, specifically methylates the pseudouridine at position 1915 (m3Psi1915) in 23S rRNA. In Bordetella petrii (strain ATCC BAA-461 / DSM 12804 / CCUG 43448), this protein is Ribosomal RNA large subunit methyltransferase H.